Reading from the N-terminus, the 520-residue chain is Tubby-related protein 2 (520 aa).

2 positions are modified to phosphoserine: Ser-135 and Ser-190. The interval 141–236 (EVSVENGSVS…GTNSSAAHNE (96 aa)) is disordered. Residues 211–223 (QKEEDLEKKREAS) show a composition bias toward basic and acidic residues. The segment covering 224 to 233 (ESTGTNSSAA) has biased composition (polar residues).

The protein belongs to the TUB family. Strongly expressed in testis. Also expressed in retina. Expressed in cancer cell lines.

The protein localises to the cytoplasm. It localises to the secreted. The sequence is that of Tubby-related protein 2 (TULP2) from Homo sapiens (Human).